A 318-amino-acid polypeptide reads, in one-letter code: Aspartate carbamoyltransferase catalytic subunit (318 aa).

Arg-59 and Thr-60 together coordinate carbamoyl phosphate. Residue Lys-87 participates in L-aspartate binding. Carbamoyl phosphate-binding residues include Arg-109, His-137, and Gln-140. L-aspartate-binding residues include Arg-170 and Arg-224. 2 residues coordinate carbamoyl phosphate: Gly-265 and Pro-266.

The protein belongs to the aspartate/ornithine carbamoyltransferase superfamily. ATCase family. Heterododecamer (2C3:3R2) of six catalytic PyrB chains organized as two trimers (C3), and six regulatory PyrI chains organized as three dimers (R2).

It catalyses the reaction carbamoyl phosphate + L-aspartate = N-carbamoyl-L-aspartate + phosphate + H(+). It participates in pyrimidine metabolism; UMP biosynthesis via de novo pathway; (S)-dihydroorotate from bicarbonate: step 2/3. Catalyzes the condensation of carbamoyl phosphate and aspartate to form carbamoyl aspartate and inorganic phosphate, the committed step in the de novo pyrimidine nucleotide biosynthesis pathway. This is Aspartate carbamoyltransferase catalytic subunit from Rhizobium rhizogenes (strain K84 / ATCC BAA-868) (Agrobacterium radiobacter).